Here is a 258-residue protein sequence, read N- to C-terminus: MLLLVDAGNTRIKWVLVDCSSGQQTPGSWHVAGSAARAETAQLAQAWSSFSISRVLLSNVAGAELREELERAVLHAAGDIELEWFASTPAAGGVRNHYLNPAQLGSDRFAAAIGAHVLFPNRPLVVATCGTATTIDAVNADGAFVGGMILPGLALMASALANNTAQLPEVALHASSTQPFADNTDAAIVSGCLAAQAGAIERAVKAHAAAHPQGELYCILAGGAADLIAPHLSIAYKRVDNLVLIGLHTVAIHTLPTC.

6-13 (DAGNTRIK) contacts ATP. Substrate contacts are provided by residues Y98 and 105–108 (GSDR). D107 serves as the catalytic Proton acceptor. T131 serves as a coordination point for ATP. T184 is a binding site for substrate.

This sequence belongs to the type III pantothenate kinase family. Homodimer. Requires NH4(+) as cofactor. It depends on K(+) as a cofactor.

Its subcellular location is the cytoplasm. It carries out the reaction (R)-pantothenate + ATP = (R)-4'-phosphopantothenate + ADP + H(+). It participates in cofactor biosynthesis; coenzyme A biosynthesis; CoA from (R)-pantothenate: step 1/5. In terms of biological role, catalyzes the phosphorylation of pantothenate (Pan), the first step in CoA biosynthesis. The sequence is that of Type III pantothenate kinase from Herminiimonas arsenicoxydans.